The chain runs to 256 residues: Type III pantothenate kinase (256 aa).

Residue 6-13 participates in ATP binding; sequence DIGNTHTV. Substrate contacts are provided by residues Tyr-100 and 107 to 110; that span reads GADR. The active-site Proton acceptor is Asp-109. K(+) is bound at residue Asp-129. Thr-132 lines the ATP pocket. Thr-184 is a substrate binding site.

The protein belongs to the type III pantothenate kinase family. In terms of assembly, homodimer. NH4(+) is required as a cofactor. Requires K(+) as cofactor.

Its subcellular location is the cytoplasm. The enzyme catalyses (R)-pantothenate + ATP = (R)-4'-phosphopantothenate + ADP + H(+). Its pathway is cofactor biosynthesis; coenzyme A biosynthesis; CoA from (R)-pantothenate: step 1/5. Functionally, catalyzes the phosphorylation of pantothenate (Pan), the first step in CoA biosynthesis. This Acidothermus cellulolyticus (strain ATCC 43068 / DSM 8971 / 11B) protein is Type III pantothenate kinase.